The sequence spans 157 residues: Transcription elongation factor GreA (157 aa).

The protein belongs to the GreA/GreB family.

Functionally, necessary for efficient RNA polymerase transcription elongation past template-encoded arresting sites. The arresting sites in DNA have the property of trapping a certain fraction of elongating RNA polymerases that pass through, resulting in locked ternary complexes. Cleavage of the nascent transcript by cleavage factors such as GreA or GreB allows the resumption of elongation from the new 3'terminus. GreA releases sequences of 2 to 3 nucleotides. This is Transcription elongation factor GreA from Caulobacter sp. (strain K31).